The sequence spans 306 residues: Aspartate carbamoyltransferase catalytic subunit (306 aa).

Residues Arg-55 and Thr-56 each coordinate carbamoyl phosphate. Lys-84 lines the L-aspartate pocket. Carbamoyl phosphate is bound by residues Arg-105, His-133, and Gln-136. Residues Arg-166 and Arg-227 each contribute to the L-aspartate site. Carbamoyl phosphate-binding residues include Leu-265 and Pro-266.

Belongs to the aspartate/ornithine carbamoyltransferase superfamily. ATCase family. As to quaternary structure, heterododecamer (2C3:3R2) of six catalytic PyrB chains organized as two trimers (C3), and six regulatory PyrI chains organized as three dimers (R2).

It catalyses the reaction carbamoyl phosphate + L-aspartate = N-carbamoyl-L-aspartate + phosphate + H(+). It functions in the pathway pyrimidine metabolism; UMP biosynthesis via de novo pathway; (S)-dihydroorotate from bicarbonate: step 2/3. Functionally, catalyzes the condensation of carbamoyl phosphate and aspartate to form carbamoyl aspartate and inorganic phosphate, the committed step in the de novo pyrimidine nucleotide biosynthesis pathway. The sequence is that of Aspartate carbamoyltransferase catalytic subunit from Neisseria meningitidis serogroup C (strain 053442).